The primary structure comprises 197 residues: MTDSDGKTDKSGEPAAEVEPVVSKPYVMPDDPEDDALDALNKQLAEAKDRTLRTLAEMENLRKRTAREVSDARTYGISGFARDVLEIADNLQRALDAVPADARAAPDPGLKALIEGVELTERSLHNALEKHGVKKFDPAGEKFDPNVHQAMYEVPDPSIPVGTVAQVIQAGYMIGERVLRPALVGVAKGGAKAAAPE.

The segment covering 1–12 (MTDSDGKTDKSG) has biased composition (basic and acidic residues). Positions 1-35 (MTDSDGKTDKSGEPAAEVEPVVSKPYVMPDDPEDD) are disordered.

The protein belongs to the GrpE family. Homodimer.

It localises to the cytoplasm. Functionally, participates actively in the response to hyperosmotic and heat shock by preventing the aggregation of stress-denatured proteins, in association with DnaK and GrpE. It is the nucleotide exchange factor for DnaK and may function as a thermosensor. Unfolded proteins bind initially to DnaJ; upon interaction with the DnaJ-bound protein, DnaK hydrolyzes its bound ATP, resulting in the formation of a stable complex. GrpE releases ADP from DnaK; ATP binding to DnaK triggers the release of the substrate protein, thus completing the reaction cycle. Several rounds of ATP-dependent interactions between DnaJ, DnaK and GrpE are required for fully efficient folding. The sequence is that of Protein GrpE from Nitrobacter winogradskyi (strain ATCC 25391 / DSM 10237 / CIP 104748 / NCIMB 11846 / Nb-255).